We begin with the raw amino-acid sequence, 141 residues long: MLLPKRTKYRKQFRGRMTGDTKGGDYVAFGDYGLVALEPAWIKSNQIEACRIVMSRHFRRGGKIYIRIFPDKPVTKKPAETRMGKGKGAVEYWVSVVKPGRVMFEVSGVTEEQAREAFRLAGHKLPIQTKMVKREVYDEAQ.

This sequence belongs to the universal ribosomal protein uL16 family. Part of the 50S ribosomal subunit.

Its function is as follows. Binds 23S rRNA and is also seen to make contacts with the A and possibly P site tRNAs. The sequence is that of Large ribosomal subunit protein uL16 from Deinococcus geothermalis (strain DSM 11300 / CIP 105573 / AG-3a).